The primary structure comprises 1480 residues: Nonribosomal peptide synthetase inpA (1480 aa).

A compositionally biased stretch (low complexity) spans 1–17; it reads MSHSMSSSSSSSSSSSS. The segment at 1–24 is disordered; sequence MSHSMSSSSSSSSSSSSSRDEGQS. The interval 44–458 is condensation; sequence VQDVYPCTPL…QLISPQDLDQ (415 aa). An adenylation region spans residues 479–871; sequence QRHIDTRPDA…GRKDSQVKIR (393 aa). In terms of domain architecture, Carrier spans 1003-1082; it reads DSTNKVALRL…GLAAMITSPH (80 aa). The residue at position 1041 (Ser1041) is an O-(pantetheine 4'-phosphoryl)serine. The interval 1117–1436 is thioesterase (TE) domain; sequence KVFLTGATGL…VLAMLQDPQM (320 aa).

It belongs to the NRP synthetase family.

Its pathway is secondary metabolite biosynthesis. Its function is as follows. Nonribosomal peptide synthetase; part of the inp gene cluster that mediates the biosynthesis of fellutamide B, a mycotoxin that acts as a proteasome inhibitor. In the first step of fellutabmide B biosynthesis, inpC activates 3-hydroxydodecanoic acid to generate 3-hydroxydodecanoyl-AMP that is then loaded onto the T0 domain of inpB. The 3-hydroxydodecanoyl-S-phosphopantetheinyl-T0 is sequentially extended with L-Asn and L-Gln by the two CAT modules of inpB. The linear lipodipeptide from inpB is then transferred onto inpA for the addition of the third amino acid, L-Leu. Reductive releasing of the lipotripeptide by the TE domain of inpA produces (2S)-fellutamide B. InpF might be involved in the release and transfer of the lipodipeptide from inpB to inpA. The inp cluster-encoded proteasome subunit inpE confers resistance to internally produced fellutamides. The MFS efflux transporter inpD may contribute to fellutamide resistance as well. This is Nonribosomal peptide synthetase inpA from Emericella nidulans (strain FGSC A4 / ATCC 38163 / CBS 112.46 / NRRL 194 / M139) (Aspergillus nidulans).